A 540-amino-acid polypeptide reads, in one-letter code: Putative sel1-like repeat-containing protein R815 (540 aa).

Sel1-like repeat units lie at residues 129 to 164, 165 to 200, 201 to 236, 237 to 272, 273 to 308, and 309 to 344; these read IDAQ…YKEN, LFGL…KHNY, PAVK…NQGY, PLAQ…NNGC, LYAT…SENY, and LLAI…NSTK.

The chain is Putative sel1-like repeat-containing protein R815 from Acanthamoeba polyphaga (Amoeba).